The following is a 195-amino-acid chain: NADH-quinone oxidoreductase subunit B (195 aa).

The [4Fe-4S] cluster site is built by cysteine 74, cysteine 75, cysteine 139, and cysteine 169.

This sequence belongs to the complex I 20 kDa subunit family. NDH-1 is composed of 14 different subunits. Subunits NuoB, C, D, E, F, and G constitute the peripheral sector of the complex. [4Fe-4S] cluster is required as a cofactor.

The protein localises to the cell inner membrane. The catalysed reaction is a quinone + NADH + 5 H(+)(in) = a quinol + NAD(+) + 4 H(+)(out). Its function is as follows. NDH-1 shuttles electrons from NADH, via FMN and iron-sulfur (Fe-S) centers, to quinones in the respiratory chain. The immediate electron acceptor for the enzyme in this species is believed to be ubiquinone. Couples the redox reaction to proton translocation (for every two electrons transferred, four hydrogen ions are translocated across the cytoplasmic membrane), and thus conserves the redox energy in a proton gradient. This Methylorubrum extorquens (strain PA1) (Methylobacterium extorquens) protein is NADH-quinone oxidoreductase subunit B.